The sequence spans 277 residues: MSSLEIIVDKILKFLEKQPKPEGRPFILGISGPQGSGKSTLASALDTELTRKNESVVKFSLDDFYLTHAEQVELAKNNPNNPLVQHRGLAGTHDVTFLNNVLNAFVKGSDEEVSIPFYDKSKFGGYGDRGDESQWKKANPKTTTYVIFEGWMVGFEPLDSCMLSVRARSTRWQNIEGSLLWVNRKLADYQPIFQKIDSLVELEAQEINYVYRWRLQQEHALKARIHKGMSDEEVIEFVNHYMPQYVFYLGTLSNKVHLNPHCLEIILDENRYPVVMH.

Residue 32-39 coordinates ATP; sequence GPQGSGKS.

It belongs to the GLYK kinase family.

The protein resides in the cytoplasm. The protein localises to the nucleus. Has a role in meiosis. This is an uncharacterized protein from Schizosaccharomyces pombe (strain 972 / ATCC 24843) (Fission yeast).